Consider the following 205-residue polypeptide: Isochorismatase domain-containing protein 2 (205 aa).

It belongs to the isochorismatase family.

This chain is Isochorismatase domain-containing protein 2 (isoc2), found in Xenopus laevis (African clawed frog).